We begin with the raw amino-acid sequence, 925 residues long: MDRSGFGEISSPVIREAEVTRTARKQSAQKRVLLQASQDENFGNTTPRNQVIPRTPSSFRQPFTPTSRSLLRQPDISCILGTGGKSPRLTQSSGFFGNLSMVTNLDDSNWAAAFSSQRSGLFTNTEPHSITEDVTISAVMLREDDPGEAASMSMFSDFLQSFLKHSSSTVFDLVEEYENICGSQVNILSKIVSRATPGLQKFSKTASMLWLLQQEMVTWRLLASLYRDRIQSALEEESVFAVTAVNASEKTVVEALFQRDSLVRQSQLVVDWLESIAKDEIGEFSDNIEFYAKSVYWENTLHTLKQRQLTSYVGSVRPLVTELDPDAPIRQKMPLDDLDREDEVRLLKYLFTLIRAGMTEEAQRLCKRCGQAWRAATLEGWKLYHDPNVNGGTELEPVEGNPYRRIWKISCWRMAEDELFNRYERAIYAALSGNLKQLLPVCDTWEDTVWAYFRVMVDSLVEQEIQTSVATLDETEELPREYLGANWTLEKVFEELQATDKKRVLEENQEHYHIVQKFLILGDIDGLMDEFSKWLSKSRNNLPGHLLRFMTHLILFFRTLGLQTKEEVSIEVLKTYIQLLIREKHTNLIAFYTCHLPQDLAVAQYALFLESVTEFEQRHHCLELAKEADLDVATITKTVVENIRKKDNGEFSHHDLAPALDTGTTEEDRLKIDVIDWLVFDPAQRAEALKQGNAIMRKFLASKKHEAAKEVFVKIPQDSIAEIYNQCEEQGMESPLPAEDDNAIREHLCIRAYLEAHETFNEWFKHMNSVPQKPALIPQPTFTEKVAHEHKEKKYEMDFGIWKGHLDALTADVKEKMYNVLLFVDGGWMVDVREDAKEDHERTHQMVLLRKLCLPMLCFLLHTILHSTGQYQECLQLADMVSSERHKLYLVFSKEELRKLLQKLRESSLMLLDQGLDPLGYEIQL.

Met1 carries the N-acetylmethionine modification. 4 positions are modified to phosphoserine: Ser4, Ser10, Ser11, and Ser37. The tract at residues Thr20–Thr66 is disordered. Composition is skewed to polar residues over residues Gln35–Asn49 and Thr55–Thr66. A phosphothreonine mark is found at Thr46 and Thr55. Residues Ser57 and Ser58 each carry the phosphoserine modification. At Arg60 the chain carries Asymmetric dimethylarginine; alternate. At Arg60 the chain carries Omega-N-methylarginine; alternate. Position 64 is a phosphothreonine (Thr64). The residue at position 68 (Arg68) is an Omega-N-methylarginine. Phosphoserine is present on residues Ser69 and Ser86.

Belongs to the nucleoporin Nup84/Nup107 family. As to quaternary structure, part of the nuclear pore complex (NPC). Forms part of the Nup160 subcomplex in the nuclear pore which is composed of NUP160, NUP133, NUP107 and Nup96; this complex plays a role in RNA export and in tethering Nup98 and NUP153 to the nucleus. Does not interact with TPR. Interacts with ZNF106. As to expression, ubiquitously expressed in fetal and adult tissues.

The protein resides in the nucleus membrane. Its subcellular location is the nucleus. The protein localises to the nuclear pore complex. It localises to the chromosome. It is found in the centromere. The protein resides in the kinetochore. Functionally, plays a role in the nuclear pore complex (NPC) assembly and/or maintenance. Required for the assembly of peripheral proteins into the NPC. May anchor NUP62 to the NPC. Involved in nephrogenesis. The chain is Nuclear pore complex protein Nup107 (NUP107) from Homo sapiens (Human).